The sequence spans 492 residues: 3-ketoacyl-CoA synthase 5 (492 aa).

The next 2 helical transmembrane spans lie at 20–40 (LINN…AIEL) and 59–79 (LLHI…YFMS). Positions 76-365 (YFMSKPRTVY…FLSSLIGRKI (290 aa)) constitute an FAE domain. Active-site residues include Cys220, His299, His383, His387, His416, and Asn420.

This sequence belongs to the thiolase-like superfamily. Chalcone/stilbene synthases family. As to expression, expressed in siliques, flowers, leaves and seedlings.

Its subcellular location is the membrane. It carries out the reaction a very-long-chain acyl-CoA + malonyl-CoA + H(+) = a very-long-chain 3-oxoacyl-CoA + CO2 + CoA. It functions in the pathway lipid metabolism; fatty acid biosynthesis. With respect to regulation, inhibited by K3 herbicides such as alachlor, allidochlor, anilofos, cafenstrole and flufenacet. Strongly inhibited by metazachlor and mefluidide. Mediates mostly the synthesis of VLCFAs from 26 to 30 carbons in length (e.g. C20:1, C26, C28, C30). The chain is 3-ketoacyl-CoA synthase 5 from Arabidopsis thaliana (Mouse-ear cress).